Consider the following 203-residue polypeptide: Mpv17-like protein (203 aa).

Residues 1 to 12 (MRILIQFTKRHP) are Cytoplasmic-facing. Residues 13-30 (WLTNVTIYGSLFASADIV) form a helical membrane-spanning segment. Over 31–49 (QQKLSKSPTEPIDFKQTAK) the chain is Lumenal. A helical membrane pass occupies residues 50–69 (VGLVGFCFHANFNFFWLRFI). The Cytoplasmic portion of the chain corresponds to 70–89 (ERTFPGSAPLNVIRKVACDQ). Residues 90-107 (LMAAPITISAFYTGLSLL) form a helical membrane-spanning segment. The Lumenal segment spans residues 108–143 (DGERDVFKNLKEKFWPTYKTGVMCWTVFQTINFSVI). A helical membrane pass occupies residues 144–166 (PPFVRTAYIGVCAFLWTTFLCYI). The Cytoplasmic segment spans residues 167 to 203 (RNRDINEVTTRLLHAVPNIRGKMAFPQDQDDNKPADK).

The protein belongs to the peroxisomal membrane protein PXMP2/4 family.

The protein localises to the peroxisome membrane. Participates in reactive oxygen species metabolism by up- or down-regulation of the genes of antioxidant enzymes. Protective against the mitochondrial apoptotic cascade. This chain is Mpv17-like protein (mpv17l), found in Xenopus laevis (African clawed frog).